The primary structure comprises 224 residues: uncharacterized protein (224 aa).

This is an uncharacterized protein from Listeria monocytogenes serovar 1/2a (strain ATCC BAA-679 / EGD-e).